The chain runs to 160 residues: Large ribosomal subunit protein uL22c (160 aa).

It belongs to the universal ribosomal protein uL22 family. Part of the 50S ribosomal subunit.

Its subcellular location is the plastid. The protein localises to the chloroplast. Its function is as follows. This protein binds specifically to 23S rRNA. In terms of biological role, the globular domain of the protein is located near the polypeptide exit tunnel on the outside of the subunit, while an extended beta-hairpin is found that lines the wall of the exit tunnel in the center of the 70S ribosome. In Crucihimalaya wallichii (Rock-cress), this protein is Large ribosomal subunit protein uL22c (rpl22).